The primary structure comprises 641 residues: Putative ABC transporter ATP-binding protein MA_0870 (641 aa).

In terms of domain architecture, ABC transporter 1 spans 10–250; that stretch reads IEIKDLWYTY…IEVFHRLGLR (241 aa). 44 to 51 provides a ligand contact to ATP; it reads GPTGCGKS. Positions 286 to 332 are disordered; the sequence is VKTPRNFSNPEEETGRRTDPAERNEFVNTGSGNIKYGDNRSENKGSE. Composition is skewed to basic and acidic residues over residues 298–310 and 322–332; these read ETGRRTDPAERNE and GDNRSENKGSE. The ABC transporter 2 domain maps to 338-566; the sequence is ISIRDLWSGY…IEILKQASLT (229 aa). ATP is bound at residue 371–378; it reads GTNGSGKS.

Belongs to the ABC transporter superfamily.

The protein localises to the cell membrane. In terms of biological role, probably part of an ABC transporter complex. Responsible for energy coupling to the transport system. In Methanosarcina acetivorans (strain ATCC 35395 / DSM 2834 / JCM 12185 / C2A), this protein is Putative ABC transporter ATP-binding protein MA_0870.